We begin with the raw amino-acid sequence, 199 residues long: Chaperone protein TorD (199 aa).

Belongs to the TorD/DmsD family. TorD subfamily.

The protein resides in the cytoplasm. Functionally, involved in the biogenesis of TorA. Acts on TorA before the insertion of the molybdenum cofactor and, as a result, probably favors a conformation of the apoenzyme that is competent for acquiring the cofactor. In Escherichia coli O6:H1 (strain CFT073 / ATCC 700928 / UPEC), this protein is Chaperone protein TorD.